We begin with the raw amino-acid sequence, 256 residues long: MFKRKKNAGQKRTTIIDSDSSSEGSGDESALSSAFKRRKNDTQKRTTPTSVATSTKVRAPSFSSTIDHSHSRNLSKTDEATKETILYAKDDSDDSQKLSKGPYKVPFSKPTTTTTVGLKASSNIKSTTSQDYQPDVCKDYKLTGFCGYGDSCKFLHMREDYKAGWQIEREWEIKNREDDPPRDAGGVSRDADTATSRADSGIPDTCPICQGEFKSPVVTQCCHYFCEKCFLAKHKKKQNCFVCGKNTNGVCKPFKR.

A disordered region spans residues 1–80 (MFKRKKNAGQ…SRNLSKTDEA (80 aa)). Low complexity predominate over residues 18–34 (SDSSSEGSGDESALSSA). The span at 45–66 (RTTPTSVATSTKVRAPSFSSTI) shows a compositional bias: polar residues. Positions 67–80 (DHSHSRNLSKTDEA) are enriched in basic and acidic residues. The segment at 131-159 (DYQPDVCKDYKLTGFCGYGDSCKFLHMRE) adopts a C3H1-type zinc-finger fold. The span at 173–182 (IKNREDDPPR) shows a compositional bias: basic and acidic residues. A disordered region spans residues 173-200 (IKNREDDPPRDAGGVSRDADTATSRADS). The RING-type zinc finger occupies 206–244 (CPICQGEFKSPVVTQCCHYFCEKCFLAKHKKKQNCFVCG).

The protein belongs to the CWC24 family. In terms of assembly, associated with the spliceosome.

Its subcellular location is the nucleus. Its function is as follows. Involved in pre-mRNA splicing. This Yarrowia lipolytica (strain CLIB 122 / E 150) (Yeast) protein is Pre-mRNA-splicing factor CWC24 (CWC24).